The chain runs to 539 residues: Glucans biosynthesis protein D (539 aa).

The segment at residues 1 to 31 (MHRRNLLKASMALAAYTGLSASGLLAARAWA) is a signal peptide (tat-type signal).

The protein belongs to the OpgD/OpgG family. Predicted to be exported by the Tat system. The position of the signal peptide cleavage has not been experimentally proven.

The protein resides in the periplasm. It functions in the pathway glycan metabolism; osmoregulated periplasmic glucan (OPG) biosynthesis. Functionally, probably involved in the control of the structural glucose backbone of osmoregulated periplasmic glucans (OPGs). In Pseudomonas fluorescens (strain ATCC BAA-477 / NRRL B-23932 / Pf-5), this protein is Glucans biosynthesis protein D.